Consider the following 183-residue polypeptide: NADH-quinone oxidoreductase subunit B (183 aa).

[4Fe-4S] cluster is bound by residues Cys-60, Cys-61, Cys-125, and Cys-154.

The protein belongs to the complex I 20 kDa subunit family. NDH-1 is composed of 14 different subunits. Subunits NuoB, C, D, E, F, and G constitute the peripheral sector of the complex. The cofactor is [4Fe-4S] cluster.

It localises to the cell inner membrane. It catalyses the reaction a quinone + NADH + 5 H(+)(in) = a quinol + NAD(+) + 4 H(+)(out). NDH-1 shuttles electrons from NADH, via FMN and iron-sulfur (Fe-S) centers, to quinones in the respiratory chain. The immediate electron acceptor for the enzyme in this species is believed to be ubiquinone. Couples the redox reaction to proton translocation (for every two electrons transferred, four hydrogen ions are translocated across the cytoplasmic membrane), and thus conserves the redox energy in a proton gradient. The protein is NADH-quinone oxidoreductase subunit B of Desulfovibrio desulfuricans (strain ATCC 27774 / DSM 6949 / MB).